The chain runs to 658 residues: Transport protein particle subunit trs85-1 (658 aa).

It belongs to the TRS85 family. Part of the multisubunit TRAPP (transport protein particle) complexes I and II.

The protein resides in the golgi apparatus. It is found in the cis-Golgi network. In terms of biological role, component of the TRAPP I and TRAPP II complexes. TRAPP I plays a key role in the late stages of endoplasmic reticulum to Golgi traffic. TRAPP II seems to play a role in intra-Golgi transport. Has a role late in meiosis following DNA replication. In Schizosaccharomyces pombe (strain 972 / ATCC 24843) (Fission yeast), this protein is Transport protein particle subunit trs85-1 (trs85-1).